Consider the following 206-residue polypeptide: Large ribosomal subunit protein uL4 (206 aa).

Residues 43 to 78 form a disordered region; it reads ARSGNRAQKDREQVKHTTKKPWRQKGTGRARAGMSS. A compositionally biased stretch (basic residues) spans 58 to 70; sequence HTTKKPWRQKGTG.

Belongs to the universal ribosomal protein uL4 family. In terms of assembly, part of the 50S ribosomal subunit.

Functionally, one of the primary rRNA binding proteins, this protein initially binds near the 5'-end of the 23S rRNA. It is important during the early stages of 50S assembly. It makes multiple contacts with different domains of the 23S rRNA in the assembled 50S subunit and ribosome. Its function is as follows. Forms part of the polypeptide exit tunnel. The protein is Large ribosomal subunit protein uL4 of Polynucleobacter necessarius subsp. necessarius (strain STIR1).